The following is a 1883-amino-acid chain: MAQQQQQQHLQQQQQQHHQQQQLQQLQQQQQLPQYNNNLYNLNYNMEDPERRKRREREKYERQQGIQSDDRETSLFEAPRRLNPSEGDNMITAALGEFVDAKEHMCMNMVGIHRQAPGGGSNARLQGQATTPIINSLSSINSTTTTSSSASLLPGQLPTSQQQQQQQQQQQQHYQQQQRAPTYLKQADNKPPYNGRGGYPGQPMKNDIPSSSGMAPPRGPPRSASSSSSASNNNSSSATNNATAAAATSASTAPLLGPPMSTQMPNGREKSYLGPPAPALSNGGRFVPPAASGKRTSNTAGLQPPPPEKDISKIINEMTNSYRVTPLTSIAATPHAPTRENYNLNGPNKNKYAFDDVEPIGPLNSPPAASGASSSSLSCTTNSSSSLLMTPLLAPIAPITSPIAPLLTTPPQASQLPLPLPLLPPLAGATTVLPPALGMAAVAPIQQLMPTPPKASPTPPTAIRPLKSEKNHSLEKQDSCLENDLELSESDDDRKRDICSAGNSSNSSETDSSESGSEASSKGEAQQQQQQQQQLLHHQHQQQLLLQQQQQQQQQQRATATTANGGNKKKCQTIIASGANTISGLLTSSGLGGSGGAVNATSNTNSGLLGGGGGSGSTGGGGGSSSSGMGNMSSSSSSNKTPSPTDSNRWHLSRFFPKPTNQATAESVSPGNVACGNVSMKVPGILPGGAQIIPESIDVTTAIVKNEKLHDDTRRITDDEDEDEQQQQRYAAGLSVTVKKEQQEQQQQQQQQQQQQQQQQQQQQQQQQLSAEQLALAGALPNNQIKREVRLSDSASISSGSASGSSSSDSAAGEVVPLPGPGETLQIPGVPAAITTVLRVPPAMQQKVPPNSVTLTPIGPLPASPKPRQKKPRKKKMSAATAPPLDSSDEDEPASSNKKHALELAATTAAAAAAIAAAPAATAAALPAVKKGRGRPRKQQQQLQQTQSGNLSSASAGSLAKGPTLTAAKKPLAKSTAAAAAAAALAATALTVAGSRKREHSSNSSSNGNTPTKKLHAAPATVAAAAAAAAAATTLLPPTAAAGSSSDEDSTSSSCSSTKSSNSSSSGSDSEATATTAAAATTAAAAAAATTTTTQNPAKKRIVKINKLGVVSSSKNNRLYGAGSSSNSSSSETEEQQQQQQQHKQQQQLLLMQQQQQQQQQQQQKQQLQQHQQQQPLQPQQQQQQQSHFTPDAKQARQRSSSSDGSSSSSTDSSSTNSSSSSDEVDVHHGGGKRKSDKKKICTLTRIFNPKEGGAKKQGQVVIIDQSEEQLQQQQQQLQQQQQQQQQHQQQQQQQQQQEQQQSKEWKPRATPTQLLGATLASPARTTTPHLTSLMCKIDLSKLARVPPEWYQKSYRQYAAEQQQQQQQHLHTQQLHHPPHHQHQHYQQQHQPHQQKAQQNGHLSSRSAEGARTPKELQQAYGMPNGYVTSGGAAGAAGAASKLLGGVKHEHGVKPEPELDAGYEAKYKPNSVKQEFMPKQEMPTRRRKRSSSSSPYKEKKRKKEKADQVSKELLPVPVLLPANNHERLSRDKLELLQQEISSANGSPTKRSFPLAHAQQQQHQQQQQQQQHQPQHQQQLKATTTTSTTATVAAVQTSTTATQQPTTCSEAVQTTPPPVAPPPPPRLIYRSHFDNEEEPPSDDLRKNEILLQEAIRRKRAADSERDSFKQMTLYLEAIVYFLLTADAMERSNMEATWTMYKDTLTLIKFISSKNRPYQQSTNGKHESHNIVAILSLRCQSLISLKLYKLRRANCRAIIASCSEFFRTGGRGDILNGNTLSSISPSNSVGSQGSGSNTPPGRIVPQDIHNQLCRQNEYLTYVNSAHDLWDQADRLVRTGNHIDFIRKLDHENGPMTLHSTMHEVFRYVQAGLKTLRDSVSYPQSQ.

Residues 1-45 (MAQQQQQQHLQQQQQQHHQQQQLQQLQQQQQLPQYNNNLYNLNYN) are compositionally biased toward low complexity. Disordered regions lie at residues 1–88 (MAQQ…SEGD), 140–311 (INST…EKDI), 329–381 (SIAA…SCTT), 449–540 (MPTP…HHQH), 609–654 (LGGG…HLSR), 796–827 (SISSGSASGSSSSDSAAGEVVPLPGPGETLQI), 844–901 (MQQK…KKHA), 922–962 (TAAA…LAKG), 992–1018 (VAGSRKREHSSNSSSNGNTPTKKLHAA), 1039–1075 (TAAAGSSSDEDSTSSSCSSTKSSNSSSSGSDSEATAT), 1115–1145 (KNNRLYGAGSSSNSSSSETEEQQQQQQQHKQ), 1170–1238 (QHQQ…KSDK), 1358–1413 (YAAE…GART), 1450–1510 (EHGV…DQVS), 1543–1583 (ANGS…KATT), 1595–1641 (QTST…PPSD), and 1783–1803 (PSNSVGSQGSGSNTPPGRIVP). The span at 57-80 (REKYERQQGIQSDDRETSLFEAPR) shows a compositional bias: basic and acidic residues. 4 stretches are compositionally biased toward low complexity: residues 140 to 154 (INSTTTTSSSASLLP), 161 to 178 (QQQQQQQQQQQQHYQQQQ), 223 to 253 (SASSSSSASNNNSSSATNNATAAAATSASTA), and 362 to 381 (PLNSPPAASGASSSSLSCTT). Over residues 450–462 (PTPPKASPTPPTA) the composition is skewed to pro residues. Threonine 458 carries the post-translational modification Phosphothreonine. Residues 466–479 (LKSEKNHSLEKQDS) are compositionally biased toward basic and acidic residues. Over residues 481–491 (LENDLELSESD) the composition is skewed to acidic residues. Phosphoserine is present on residues serine 488 and serine 490. A compositionally biased stretch (low complexity) spans 500–540 (SAGNSSNSSETDSSESGSEASSKGEAQQQQQQQQQLLHHQH). Residues 609 to 625 (LGGGGGSGSTGGGGGSS) are compositionally biased toward gly residues. 2 stretches are compositionally biased toward low complexity: residues 626–639 (SSGMGNMSSSSSSN) and 796–813 (SISSGSASGSSSSDSAAG). Positions 867 to 877 (PRQKKPRKKKM) are enriched in basic residues. Phosphoserine is present on residues serine 887 and serine 888. Residues 930 to 942 (KKGRGRPRKQQQQ) constitute a DNA-binding region (a.T hook). The segment covering 939-962 (QQQQLQQTQSGNLSSASAGSLAKG) has biased composition (low complexity). Phosphoserine occurs at positions 953 and 955. Low complexity-rich tracts occupy residues 1124–1145 (SSSNSSSSETEEQQQQQQQHKQ), 1170–1186 (QHQQQQPLQPQQQQQQQ), 1200–1222 (SSSSDGSSSSSTDSSSTNSSSSS), 1362–1376 (QQQQQQQHLHTQQLH), and 1385–1399 (HYQQQHQPHQQKAQQ). The span at 1450-1467 (EHGVKPEPELDAGYEAKY) shows a compositional bias: basic and acidic residues. Serine 1546 bears the Phosphoserine mark. Threonine 1548 carries the post-translational modification Phosphothreonine. 2 stretches are compositionally biased toward low complexity: residues 1558-1583 (QQQQHQQQQQQQQHQPQHQQQLKATT) and 1595-1606 (QTSTTATQQPTT). Positions 1614 to 1625 (TPPPVAPPPPPR) are enriched in pro residues. The segment covering 1783 to 1794 (PSNSVGSQGSGS) has biased composition (low complexity).

This sequence belongs to the AF4 family.

It localises to the nucleus. Has a role in transcriptional regulation. Acts in parallel with the Ras/MAPK and the PI3K/PKB pathways in the control of cell identity and cellular growth. Essential for regulation of the cytoskeleton and cell growth but not for cell proliferation or growth rate. Required specifically for the microtubule-based basal transport of lipid droplets. Plays a partially redundant function downstream of Raf in cell fate specification in the developing eye. Pair-rule protein that regulates embryonic cellularization, gastrulation and segmentation. The sequence is that of AF4/FMR2 family member lilli from Drosophila grimshawi (Hawaiian fruit fly).